A 198-amino-acid chain; its full sequence is Thymidine kinase (198 aa).

Residues Gly-15–Thr-22 and Asp-87–Gln-90 each bind ATP. Glu-88 (proton acceptor) is an active-site residue. Positions 144, 147, 182, and 185 each coordinate Zn(2+).

It belongs to the thymidine kinase family. Homotetramer.

It localises to the cytoplasm. The catalysed reaction is thymidine + ATP = dTMP + ADP + H(+). The sequence is that of Thymidine kinase from Coprothermobacter proteolyticus (strain ATCC 35245 / DSM 5265 / OCM 4 / BT).